Consider the following 327-residue polypeptide: DNA-directed RNA polymerase subunit alpha (327 aa).

The alpha N-terminal domain (alpha-NTD) stretch occupies residues 1-227 (MLIAHRPTLI…ELFGLARELN (227 aa)). Residues 244 to 327 (SDEDLRIPIE…GSYFDPNYGS (84 aa)) form an alpha C-terminal domain (alpha-CTD) region.

Belongs to the RNA polymerase alpha chain family. In terms of assembly, homodimer. The RNAP catalytic core consists of 2 alpha, 1 beta, 1 beta' and 1 omega subunit. When a sigma factor is associated with the core the holoenzyme is formed, which can initiate transcription.

The enzyme catalyses RNA(n) + a ribonucleoside 5'-triphosphate = RNA(n+1) + diphosphate. DNA-dependent RNA polymerase catalyzes the transcription of DNA into RNA using the four ribonucleoside triphosphates as substrates. This Tropheryma whipplei (strain TW08/27) (Whipple's bacillus) protein is DNA-directed RNA polymerase subunit alpha.